The primary structure comprises 464 residues: Growth hormone-releasing hormone receptor (464 aa).

The signal sequence occupies residues 1-22; that stretch reads MDSLLWATWVLCLLNLWGVALG. The Extracellular portion of the chain corresponds to 23 to 130; that stretch reads HLHLECDFIT…EEKSYFSTVK (108 aa). Intrachain disulfides connect cysteine 41–cysteine 64, cysteine 55–cysteine 96, and cysteine 78–cysteine 112. An N-linked (GlcNAc...) asparagine glycan is attached at asparagine 50. A helical membrane pass occupies residues 131 to 151; it reads IIYTTGHSISIVALCVAIAIL. Over 152–167 the chain is Cytoplasmic; the sequence is VALRRLHCPRNYIHTQ. The chain crosses the membrane as a helical span at residues 168 to 188; the sequence is LFATFILKASAVFLKDAAVFQ. Topologically, residues 189–210 are extracellular; sequence GDSTDHCSMSTILCKVSVAVSH. A helical membrane pass occupies residues 211–231; sequence FATMTNFSWLLAEAVYLSCLL. Residues 232–240 are Cytoplasmic-facing; the sequence is ASTSPRSKP. A helical membrane pass occupies residues 241 to 261; the sequence is AFWWLVLAGWGLPVLCTGTWV. Over 262 to 283 the chain is Extracellular; that stretch reads GCKLAFEDTACWDLDDSSPYWW. A helical membrane pass occupies residues 284 to 304; the sequence is IIKGPIVLSVGVNFGLFLNII. Residues 305–372 lie on the Cytoplasmic side of the membrane; that stretch reads CILLRKLGPA…QLPWRLSKST (68 aa). The helical transmembrane segment at 373-393 threads the bilayer; sequence LLLIPLFGIHYIIFNFLPDSA. Residues 394–398 lie on the Extracellular side of the membrane; sequence GLGIR. The chain crosses the membrane as a helical span at residues 399-419; the sequence is LPLELGLGSFQGFVVAVLYCF. Topologically, residues 420 to 464 are cytoplasmic; sequence LNQEVRTEISRKWYGHDPELLPARRTCTEWTTPPRSRVKVLTSEC.

It belongs to the G-protein coupled receptor 2 family. As to expression, pituitary gland.

Its subcellular location is the cell membrane. In terms of biological role, receptor for GRF, coupled to G proteins which activate adenylyl cyclase. Stimulates somatotroph cell growth, growth hormone gene transcription and growth hormone secretion. This is Growth hormone-releasing hormone receptor (Ghrhr) from Rattus norvegicus (Rat).